The primary structure comprises 270 residues: Phospholysine phosphohistidine inorganic pyrophosphate phosphatase (270 aa).

The Mg(2+) site is built by D19 and C21. Substrate-binding positions include 19–21, 56–57, and K191; these read DMC and TN. Mg(2+) is bound at residue D216.

The protein belongs to the HAD-like hydrolase superfamily. Requires Mg(2+) as cofactor.

Its subcellular location is the cytoplasm. The protein localises to the nucleus. The catalysed reaction is diphosphate + H2O = 2 phosphate + H(+). Its function is as follows. Phosphatase that hydrolyzes imidodiphosphate, 3-phosphohistidine and 6-phospholysine. Has broad substrate specificity and can also hydrolyze inorganic diphosphate, but with lower efficiency. The chain is Phospholysine phosphohistidine inorganic pyrophosphate phosphatase (lhpp) from Danio rerio (Zebrafish).